The sequence spans 55 residues: Large ribosomal subunit protein bL32c (55 aa).

This sequence belongs to the bacterial ribosomal protein bL32 family.

The protein localises to the plastid. It localises to the chloroplast. The sequence is that of Large ribosomal subunit protein bL32c from Nicotiana sylvestris (Wood tobacco).